A 458-amino-acid chain; its full sequence is Bifunctional protein GlmU (458 aa).

The tract at residues 1–229 (MNKFAIVLAA…FDESLGVNDR (229 aa)) is pyrophosphorylase. UDP-N-acetyl-alpha-D-glucosamine-binding positions include 8–11 (LAAG), K22, Q72, and 77–78 (GT). D102 provides a ligand contact to Mg(2+). UDP-N-acetyl-alpha-D-glucosamine is bound by residues G139, E154, N169, and N227. Residue N227 coordinates Mg(2+). The interval 230–250 (VALSQAELTMRKRINHQHMVN) is linker. Residues 251 to 458 (GVTLIDPATT…AKKMPHYRGQ (208 aa)) are N-acetyltransferase. UDP-N-acetyl-alpha-D-glucosamine contacts are provided by R332 and K350. The active-site Proton acceptor is the H362. 2 residues coordinate UDP-N-acetyl-alpha-D-glucosamine: Y365 and N376. Acetyl-CoA is bound by residues A379, S404, A422, and R439.

It in the N-terminal section; belongs to the N-acetylglucosamine-1-phosphate uridyltransferase family. The protein in the C-terminal section; belongs to the transferase hexapeptide repeat family. Homotrimer. Mg(2+) is required as a cofactor.

Its subcellular location is the cytoplasm. It catalyses the reaction alpha-D-glucosamine 1-phosphate + acetyl-CoA = N-acetyl-alpha-D-glucosamine 1-phosphate + CoA + H(+). It carries out the reaction N-acetyl-alpha-D-glucosamine 1-phosphate + UTP + H(+) = UDP-N-acetyl-alpha-D-glucosamine + diphosphate. It functions in the pathway nucleotide-sugar biosynthesis; UDP-N-acetyl-alpha-D-glucosamine biosynthesis; N-acetyl-alpha-D-glucosamine 1-phosphate from alpha-D-glucosamine 6-phosphate (route II): step 2/2. The protein operates within nucleotide-sugar biosynthesis; UDP-N-acetyl-alpha-D-glucosamine biosynthesis; UDP-N-acetyl-alpha-D-glucosamine from N-acetyl-alpha-D-glucosamine 1-phosphate: step 1/1. Its pathway is bacterial outer membrane biogenesis; LPS lipid A biosynthesis. Functionally, catalyzes the last two sequential reactions in the de novo biosynthetic pathway for UDP-N-acetylglucosamine (UDP-GlcNAc). The C-terminal domain catalyzes the transfer of acetyl group from acetyl coenzyme A to glucosamine-1-phosphate (GlcN-1-P) to produce N-acetylglucosamine-1-phosphate (GlcNAc-1-P), which is converted into UDP-GlcNAc by the transfer of uridine 5-monophosphate (from uridine 5-triphosphate), a reaction catalyzed by the N-terminal domain. The chain is Bifunctional protein GlmU from Lactococcus lactis subsp. lactis (strain IL1403) (Streptococcus lactis).